A 505-amino-acid polypeptide reads, in one-letter code: MNAPKPVVLCILDGWGLSDDKTANAPYLAKTPTFDAIMTKGPHARLITHGPDVGLPSGQMGNSEVGHTNIGAGRVVAMDLGQIDLAIEDGSFFDNAALRDFIARTRAAGGTAHLMGLVSDGGVHGHLNHIIAAAQAITNAGVPVVMHAITDGRDVAPKSAYGFMAELEDRLPKGARIVTVTGRYFALDRDNRWERVQEAYDAMVRGEGRRVSTAHSAIDYAYNQSESDEFITASVLTGYDGMRDGDSLFCLNFRADRAREILRAIGEPGFADFDTGARPALSALLGMVEYSDAHNAYMTTVFPKRDIVNTLGAWVARHGLRQFRLAETEKYPHVTFFLNGGKEEAEPGEDRFMPKSPKVATYDMQPEMSAPEVTDKFVEAIGAGYDLIVTNYANPDMVGHTGDLKAAIKACEAVDQGLSRVIAALEQAGGAMIVTADHGNCEMMIDPETGGPHTAHTLNPVPVALVGGPAGVTLRDGRLSDLAPTVLALMGLPKPPEMTGESLIT.

Mn(2+) is bound by residues Asp13 and Ser63. Residue Ser63 is the Phosphoserine intermediate of the active site. Residues His124, 153-154 (RD), Arg183, Arg189, 254-257 (RADR), and Lys330 contribute to the substrate site. Asp396, His400, Asp437, His438, and His456 together coordinate Mn(2+).

This sequence belongs to the BPG-independent phosphoglycerate mutase family. In terms of assembly, monomer. Mn(2+) is required as a cofactor.

It catalyses the reaction (2R)-2-phosphoglycerate = (2R)-3-phosphoglycerate. It participates in carbohydrate degradation; glycolysis; pyruvate from D-glyceraldehyde 3-phosphate: step 3/5. Functionally, catalyzes the interconversion of 2-phosphoglycerate and 3-phosphoglycerate. The protein is 2,3-bisphosphoglycerate-independent phosphoglycerate mutase of Ruegeria pomeroyi (strain ATCC 700808 / DSM 15171 / DSS-3) (Silicibacter pomeroyi).